The primary structure comprises 129 residues: Mite allergen Blo t 21 (129 aa).

Residues 1–16 (MKFIIALAALIAVACA) form the signal peptide.

Belongs to the mite group 5 allergen family. May exist as homodimer and homotrimer. As to expression, midgut and hindgut contents as well as fecal pellets (at protein level).

In Blomia tropicalis (Mite), this protein is Mite allergen Blo t 21.